The primary structure comprises 481 residues: Amino acid permease 6 (481 aa).

At 1–36 the chain is on the cytoplasmic side; it reads MEKKKSMFVEQSFPEHEIGDTNKNFDEDGRDKRTGT. Helical transmembrane passes span 37–57 and 58–78; these read WMTG…LSLA and WAIA…FSFI. The Cytoplasmic segment spans residues 79 to 125; the sequence is TYFTSTMLADCYRSPDPVTGKRNYTYMEVVRSYLGGRKVQLCGLAQY. Residues 126 to 146 traverse the membrane as a helical segment; sequence GNLIGITIGYTITASISMVAV. Over 147–167 the chain is Extracellular; the sequence is KRSNCFHKNGHNVKCATSNTP. The helical transmembrane segment at 168 to 188 threads the bilayer; sequence FMIIFAIIQIILSQIPNFHNL. Residues 189-190 lie on the Cytoplasmic side of the membrane; the sequence is SW. Residues 191–211 traverse the membrane as a helical segment; it reads LSILAAVMSFCYASIGVGLSI. The Extracellular portion of the chain corresponds to 212-242; sequence AKAAGGGEHVRTTLTGVTVGIDVSGAEKIWR. A helical transmembrane segment spans residues 243-263; that stretch reads TFQAIGDIAFAYAYSTVLIEI. At 264–283 the chain is on the cytoplasmic side; sequence QDTLKAGPPSENKAMKRASL. The chain crosses the membrane as a helical span at residues 284-304; the sequence is VGVSTTTFFYMLCGCVGYAAF. Topologically, residues 305-321 are extracellular; sequence GNDAPGNFLTGFGFYEP. A helical membrane pass occupies residues 322 to 342; that stretch reads FWLIDFANVCIAVHLIGAYQV. Residues 343–385 are Cytoplasmic-facing; that stretch reads FCQPIFQFVESQSAKRWPDNKFITGEYKIHVPCCGDFSINFLR. A helical transmembrane segment spans residues 386-405; that stretch reads LVWRTSYVVVTAVVAMIFPF. Topologically, residues 406–408 are extracellular; it reads FND. A helical transmembrane segment spans residues 409 to 427; sequence FLGLIGAASFWPLTVYFPI. At 428–447 the chain is on the cytoplasmic side; that stretch reads EMHIAQKKIPKFSFTWTWLK. Residues 448–468 traverse the membrane as a helical segment; sequence ILSWTCFIVSLVAAAGSVQGL. At 469–481 the chain is on the extracellular side; sequence IQSLKDFKPFQAP.

This sequence belongs to the amino acid/polyamine transporter 2 family. Amino acid/auxin permease (AAAP) (TC 2.A.18.2) subfamily. In terms of tissue distribution, expressed in roots and leaves, and at lower levels in stems and flowers. Found in the xylem parenchyma.

It is found in the cell membrane. In terms of biological role, amino acid-proton symporter. Stereospecific transporter with a broad specificity for tryptophan, proline, and neutral and acidic amino acids. Has an affinity for aspartate in a physiological range. Involved in the uptake of amino acids diffusing out of the xylem tracheids into the xylem parenchyma. The sequence is that of Amino acid permease 6 (AAP6) from Arabidopsis thaliana (Mouse-ear cress).